A 681-amino-acid chain; its full sequence is Pumilio domain-containing protein C6G9.14 (681 aa).

Disordered regions lie at residues 180–210 (RPGL…PGLI) and 273–322 (ASTA…NVPS). Low complexity-rich tracts occupy residues 187–210 (TPGP…PGLI) and 273–286 (ASTA…SSGS). The region spanning 319–659 (NVPSLISDDP…RILSKLERRH (341 aa)) is the PUM-HD domain. Pumilio repeat units follow at residues 342-378 (SLQN…AVFA), 379-414 (ETHP…TFIQ), 415-451 (IIAP…CIVN), 452-487 (ALRP…FIFD), 488-523 (AICE…QLVE), 524-559 (HIVP…AIIS), 560-595 (YFLY…KLIS), and 596-633 (ELMD…ELVE). Residues 656–666 (ERRHPSSKEKP) show a composition bias toward basic and acidic residues. The disordered stretch occupies residues 656–681 (ERRHPSSKEKPIVYSNSERVNTSSSA). Residues 669–681 (YSNSERVNTSSSA) show a composition bias toward polar residues.

This Schizosaccharomyces pombe (strain 972 / ATCC 24843) (Fission yeast) protein is Pumilio domain-containing protein C6G9.14.